A 764-amino-acid polypeptide reads, in one-letter code: Polyribonucleotide nucleotidyltransferase (764 aa).

Asp541 and Asp547 together coordinate Mg(2+). Residues 607–666 (PRVTAIKIPVDKIGEVIGPKGKVINQITEDTGANISIEDDGTVFVGATDGPSAQAAIDAI) form the KH domain. Residues 678 to 747 (GERFLGTVVK…NRGKISLVPV (70 aa)) enclose the S1 motif domain.

It belongs to the polyribonucleotide nucleotidyltransferase family. Mg(2+) serves as cofactor.

It is found in the cytoplasm. It catalyses the reaction RNA(n+1) + phosphate = RNA(n) + a ribonucleoside 5'-diphosphate. Involved in mRNA degradation. Catalyzes the phosphorolysis of single-stranded polyribonucleotides processively in the 3'- to 5'-direction. The polypeptide is Polyribonucleotide nucleotidyltransferase (Nocardia farcinica (strain IFM 10152)).